Reading from the N-terminus, the 278-residue chain is MAIYAIGDIQGCYDEFQQLLKEIHFDEQADQLWLAGDLVNRGPKSLEVIRFVHGLGKRAITVLGNHDLHLLAVAAGLQPLHSKDTLAAILSAPDREELITWLRHLPLLYRNSKLGITLIHAGLPPQWDIATAESCARELEAVLQGPNWRDFLAHMYGDKPVQWRDDLKGWERLRTISNCLTRLRYCDAKGRFSLKFKESPGTQTKGGLMPWFKVPHRASHGERIVFGHWATLEVGPYEGPVFALDGGCVWGGQLVALRLDKEEPQWFFVDCQGYSKIT.

This sequence belongs to the Ap4A hydrolase family.

It catalyses the reaction P(1),P(4)-bis(5'-adenosyl) tetraphosphate + H2O = 2 ADP + 2 H(+). Its function is as follows. Hydrolyzes diadenosine 5',5'''-P1,P4-tetraphosphate to yield ADP. The polypeptide is Bis(5'-nucleosyl)-tetraphosphatase, symmetrical (Nitrosococcus oceani (strain ATCC 19707 / BCRC 17464 / JCM 30415 / NCIMB 11848 / C-107)).